The chain runs to 325 residues: Iodotyrosine dehalogenase 1 homolog (325 aa).

A helical membrane pass occupies residues 42-62 (VLNVLFTLGVILFVIYQVASL). Residues 63 to 325 (LHRMNKRVEK…KPVEHITKLY (263 aa)) lie on the Cytoplasmic side of the membrane. FMN is bound by residues 135-139 (RRSCR), 163-164 (SV), 273-275 (VTS), and arginine 315.

It belongs to the nitroreductase family. It depends on FMN as a cofactor. Expressed in body-wall, anal depressor and vulval muscles.

The protein resides in the membrane. Functionally, may contribute to coordination of muscle contraction as regulatory subunit of the nonessential sup-9 potassium channel complex. May act downstream of sup-10. The sequence is that of Iodotyrosine dehalogenase 1 homolog from Caenorhabditis elegans.